A 101-amino-acid chain; its full sequence is Small ribosomal subunit protein uS14 (101 aa).

It belongs to the universal ribosomal protein uS14 family. As to quaternary structure, part of the 30S ribosomal subunit. Contacts proteins S3 and S10.

Functionally, binds 16S rRNA, required for the assembly of 30S particles and may also be responsible for determining the conformation of the 16S rRNA at the A site. This is Small ribosomal subunit protein uS14 from Tropheryma whipplei (strain TW08/27) (Whipple's bacillus).